The primary structure comprises 451 residues: CBL-interacting protein kinase 22 (451 aa).

In terms of domain architecture, Protein kinase spans 26-301 (YELGRVLGQG…IGEIFDHPWL (276 aa)). Residues 32–40 (LGQGASSKV) and Lys55 each bind ATP. Asp165 serves as the catalytic Proton acceptor. The activation loop stretch occupies residues 183–216 (DFGLSAFADADQHLGATDGLAATHCGSPAYVAPE). In terms of domain architecture, NAF spans 330–356 (ELEQAMELNAFDIIGFASGCDLSGLIG). The interval 361–389 (RVRFVLPGGDSKSVLDKVEKLGREEGLVV) is PPI.

Belongs to the protein kinase superfamily. CAMK Ser/Thr protein kinase family. SNF1 subfamily. The cofactor is Mn(2+).

The catalysed reaction is L-seryl-[protein] + ATP = O-phospho-L-seryl-[protein] + ADP + H(+). It catalyses the reaction L-threonyl-[protein] + ATP = O-phospho-L-threonyl-[protein] + ADP + H(+). Its function is as follows. CIPK serine-threonine protein kinases interact with CBL proteins. Binding of a CBL protein to the regulatory NAF domain of CIPK protein lead to the activation of the kinase in a calcium-dependent manner. This is CBL-interacting protein kinase 22 (CIPK22) from Oryza sativa subsp. japonica (Rice).